The chain runs to 98 residues: Feather keratin 2 (98 aa).

Ser2 is modified (N-acetylserine).

Belongs to the avian keratin family. The avian keratins (F-ker, S-ker, C-ker and B-ker) are a complex mixture of very similar polypeptides.

This chain is Feather keratin 2, found in Gallus gallus (Chicken).